Reading from the N-terminus, the 500-residue chain is Glucose-1-phosphate adenylyltransferase large subunit, chloroplastic/amyloplastic (500 aa).

A chloroplast-targeting transit peptide spans Arg1–Cys33. A disordered region spans residues Arg1–Thr47.

The protein belongs to the bacterial/plant glucose-1-phosphate adenylyltransferase family. Heterotetramer.

It localises to the plastid. The protein resides in the chloroplast. Its subcellular location is the amyloplast. It catalyses the reaction alpha-D-glucose 1-phosphate + ATP + H(+) = ADP-alpha-D-glucose + diphosphate. Its pathway is glycan biosynthesis; starch biosynthesis. Its activity is regulated as follows. Insensitive to 3'phosphoglycerate and orthophosphate. This protein plays a role in synthesis of starch. It catalyzes the synthesis of the activated glycosyl donor, ADP-glucose from Glc-1-P and ATP. The chain is Glucose-1-phosphate adenylyltransferase large subunit, chloroplastic/amyloplastic (AGA.7) from Triticum aestivum (Wheat).